The following is a 576-amino-acid chain: Lysine--tRNA ligase (576 aa).

Residues E412 and E419 each contribute to the Mg(2+) site.

This sequence belongs to the class-II aminoacyl-tRNA synthetase family. As to quaternary structure, homodimer. The cofactor is Mg(2+).

Its subcellular location is the cytoplasm. It catalyses the reaction tRNA(Lys) + L-lysine + ATP = L-lysyl-tRNA(Lys) + AMP + diphosphate. This is Lysine--tRNA ligase from Phocaeicola vulgatus (strain ATCC 8482 / DSM 1447 / JCM 5826 / CCUG 4940 / NBRC 14291 / NCTC 11154) (Bacteroides vulgatus).